Here is a 313-residue protein sequence, read N- to C-terminus: MSFSAHTKDELARIEGLPSCCRLAELAALAKLNGRLVHGPAELLIVTENAAIARKVFKALKMQFRLAARVEIRRKPRLKKNNEYLVRIGNQDGLGPALEEMGLCTVSLRVRPGLKRDLVRRECCRRSYLRGAFLARGSVSSPRGSYHLEITVGDQRMAADLSGLMRKVGLEGRLSPRKRGWIVYLKDGEQVADALKLMGAHAALLDFENARVYKDMRNRVNRLVNCDTANLGKTVSAGVRQEEHIRLVVQRFGLETLSPPLRQVARLRLQYPEVSLRELGELAQPPLSKSCVNHRLRKLEQIAEHILASRTRN.

The segment at residues 275-308 (SLRELGELAQPPLSKSCVNHRLRKLEQIAEHILA) is a DNA-binding region (H-T-H motif).

This sequence belongs to the WhiA family.

In terms of biological role, involved in cell division and chromosome segregation. The polypeptide is Probable cell division protein WhiA (Desulforudis audaxviator (strain MP104C)).